The chain runs to 227 residues: Enolase-phosphatase E1 (227 aa).

This sequence belongs to the HAD-like hydrolase superfamily. MasA/MtnC family. Monomer. The cofactor is Mg(2+).

It carries out the reaction 5-methylsulfanyl-2,3-dioxopentyl phosphate + H2O = 1,2-dihydroxy-5-(methylsulfanyl)pent-1-en-3-one + phosphate. Its pathway is amino-acid biosynthesis; L-methionine biosynthesis via salvage pathway; L-methionine from S-methyl-5-thio-alpha-D-ribose 1-phosphate: step 3/6. The protein operates within amino-acid biosynthesis; L-methionine biosynthesis via salvage pathway; L-methionine from S-methyl-5-thio-alpha-D-ribose 1-phosphate: step 4/6. Its function is as follows. Bifunctional enzyme that catalyzes the enolization of 2,3-diketo-5-methylthiopentyl-1-phosphate (DK-MTP-1-P) into the intermediate 2-hydroxy-3-keto-5-methylthiopentenyl-1-phosphate (HK-MTPenyl-1-P), which is then dephosphorylated to form the acireductone 1,2-dihydroxy-3-keto-5-methylthiopentene (DHK-MTPene). The sequence is that of Enolase-phosphatase E1 from Persephonella marina (strain DSM 14350 / EX-H1).